The sequence spans 338 residues: MSITVNQTVLHQLVKNVDGDSIKMESVLRDELLSITPEVEQMMLQLHQSYQNKAKAFGVFQEKSIFAQHLNRLLEQEIEFLGFSQYSTKLLADELGKYNFAESGTLILCQYNFLATDYLFIALLDSRHSMLVDEHLDIRRTEYLDITQFDIAARINLTDLQVNANSNRYLTFIKGRVGRKISDFFMDFLGAEEGLNPQVQNQCLLQAVSDYCDQGELNKEQTQAVKKQVFEYCKGQLSNGNNIELRELSDSLPTLNEQPFVVFTEKQNYGLEESIPPIRSTLKSLTKFSGSGKGVTLSFDAELLNTRIQWDPMTDTLTIKGLPPNLKDQLQKALKSEN.

This sequence belongs to the YejK family.

Its subcellular location is the cytoplasm. It is found in the nucleoid. The chain is Nucleoid-associated protein HI_0839 from Haemophilus influenzae (strain ATCC 51907 / DSM 11121 / KW20 / Rd).